We begin with the raw amino-acid sequence, 302 residues long: Putative glycine N-acyltransferase-like protein 1B (302 aa).

Belongs to the glycine N-acyltransferase family.

It carries out the reaction an acyl-CoA + L-glutamine = an N(2)-acyl-L-glutamine + CoA + H(+). Its function is as follows. Putative acyltransferase which transfers an acyl group to the N-terminus of glutamine. Can use phenylacetyl-CoA as an acyl donor. The protein is Putative glycine N-acyltransferase-like protein 1B of Homo sapiens (Human).